We begin with the raw amino-acid sequence, 268 residues long: Glutamate racemase (268 aa).

Residues 9 to 10 (DS) and 41 to 42 (YG) contribute to the substrate site. Cys73 acts as the Proton donor/acceptor in catalysis. Substrate is bound at residue 74–75 (NS). Cys183 serves as the catalytic Proton donor/acceptor. Residue 184-185 (TH) participates in substrate binding.

It belongs to the aspartate/glutamate racemases family.

The catalysed reaction is L-glutamate = D-glutamate. Its pathway is cell wall biogenesis; peptidoglycan biosynthesis. Its function is as follows. Provides the (R)-glutamate required for cell wall biosynthesis. The sequence is that of Glutamate racemase from Shewanella pealeana (strain ATCC 700345 / ANG-SQ1).